The following is a 162-amino-acid chain: E3 ubiquitin-protein ligase LAP (162 aa).

Topologically, residues 1 to 78 (MEGSDNTNTH…RWKCSFMYCN (78 aa)) are cytoplasmic. The RING-CH-type zinc-finger motif lies at 3 to 61 (GSDNTNTHCWICKDEYNVSTNFCNCKNEFKIVHKNCLEEWINFSHNTKCKICNGKYNIK). Cys11, Cys14, Cys25, Cys27, His35, Cys38, Cys51, and Cys54 together coordinate Zn(2+). Residues 79–99 (VPAICVSLICLLLLPLTILLV) traverse the membrane as a helical segment. At 100 to 121 (KFNLKSMLENIENRDLIALISA) the chain is on the lumenal side. Residues 122–142 (MAYSLPCVVGFITVVHILIAL) traverse the membrane as a helical segment. The Cytoplasmic portion of the chain corresponds to 143–162 (YDYYLAAKSDNTTYQVYEYI).

The protein belongs to the poxviridae LAP protein family.

It localises to the host membrane. The protein resides in the host Golgi apparatus. It is found in the host trans-Golgi network membrane. The protein localises to the host early endosome membrane. It catalyses the reaction S-ubiquitinyl-[E2 ubiquitin-conjugating enzyme]-L-cysteine + [acceptor protein]-L-lysine = [E2 ubiquitin-conjugating enzyme]-L-cysteine + N(6)-ubiquitinyl-[acceptor protein]-L-lysine.. E3 ubiquitin-protein ligase which promotes ubiquitination and subsequent degradation of host MHC-I and CD4 molecules, presumably to prevent lysis of infected cells by cytotoxic T-lymphocytes and NK cell. Binds target molecules through transmembrane interaction. The result of this ubiquitination is the enhancement of the endocytosis of the target chain and the delivery to the lysosome, where it is proteolytically destroyed. This Lumpy skin disease virus (LSDV) protein is E3 ubiquitin-protein ligase LAP (LW010).